The sequence spans 584 residues: Phosphoinositide phospholipase C 7 (584 aa).

The EF-hand-like domain occupies 26-102 (EIKTLFDNYS…NSPLSSLEVH (77 aa)). Residues 103–248 (QDMDAPLSHY…LKKRIMISTK (146 aa)) enclose the PI-PLC X-box domain. Active-site residues include histidine 118 and histidine 164. Residues 285 to 318 (DRSVDKNDSNGDDDDDDDDDDDDDDGDDKIKKNA) form a disordered region. Serine 287 carries the post-translational modification Phosphoserine. Positions 294-311 (NGDDDDDDDDDDDDDDGD) are enriched in acidic residues. Residues 323 to 439 (KHLIAIEAGK…GYIKKPDLLL (117 aa)) form the PI-PLC Y-box domain. A C2 domain is found at 433-566 (KKPDLLLKSN…QGIRAVPLRN (134 aa)).

Requires Ca(2+) as cofactor. As to expression, expressed in leaves, roots, flowers and siliques.

It is found in the cell membrane. The catalysed reaction is a 1,2-diacyl-sn-glycero-3-phospho-(1D-myo-inositol-4,5-bisphosphate) + H2O = 1D-myo-inositol 1,4,5-trisphosphate + a 1,2-diacyl-sn-glycerol + H(+). In terms of biological role, the production of the second messenger molecules diacylglycerol (DAG) and inositol 1,4,5-trisphosphate (IP3) is mediated by activated phosphatidylinositol-specific phospholipase C enzymes. The protein is Phosphoinositide phospholipase C 7 (PLC7) of Arabidopsis thaliana (Mouse-ear cress).